Here is a 165-residue protein sequence, read N- to C-terminus: Inorganic pyrophosphatase (165 aa).

Substrate-binding residues include Lys-21, Arg-35, and Tyr-47. Asp-57, Asp-62, and Asp-94 together coordinate Mg(2+). Tyr-131 contributes to the substrate binding site.

The protein belongs to the PPase family. As to quaternary structure, homotrimer. In presence of divalent cations the trimers aggregate to form a hexamer. Requires Mg(2+) as cofactor.

It localises to the cytoplasm. The catalysed reaction is diphosphate + H2O = 2 phosphate + H(+). Catalyzes the hydrolysis of inorganic pyrophosphate (PPi) forming two phosphate ions. This Bacillus sp. (strain PS3) protein is Inorganic pyrophosphatase.